We begin with the raw amino-acid sequence, 265 residues long: Energy-coupling factor transporter transmembrane protein EcfT (265 aa).

Helical transmembrane passes span 26–46, 47–67, 72–92, 107–127, 152–172, and 243–263; these read MVFV…QTYA, VGII…MFLF, PILF…KGGA, VIMG…TTIM, LPVH…PTLM, and HTYD…ILYL.

It belongs to the energy-coupling factor EcfT family. In terms of assembly, forms a stable energy-coupling factor (ECF) transporter complex composed of 2 membrane-embedded substrate-binding proteins (S component), 2 ATP-binding proteins (A component) and 2 transmembrane proteins (T component). May be able to interact with more than 1 S component at a time.

The protein localises to the cell membrane. Its function is as follows. Transmembrane (T) component of an energy-coupling factor (ECF) ABC-transporter complex. Unlike classic ABC transporters this ECF transporter provides the energy necessary to transport a number of different substrates. The protein is Energy-coupling factor transporter transmembrane protein EcfT of Macrococcus caseolyticus (strain JCSC5402) (Macrococcoides caseolyticum).